The sequence spans 269 residues: Tryptophan synthase alpha chain (269 aa).

Residues glutamate 49 and aspartate 60 each act as proton acceptor in the active site.

This sequence belongs to the TrpA family. Tetramer of two alpha and two beta chains.

It catalyses the reaction (1S,2R)-1-C-(indol-3-yl)glycerol 3-phosphate + L-serine = D-glyceraldehyde 3-phosphate + L-tryptophan + H2O. It participates in amino-acid biosynthesis; L-tryptophan biosynthesis; L-tryptophan from chorismate: step 5/5. In terms of biological role, the alpha subunit is responsible for the aldol cleavage of indoleglycerol phosphate to indole and glyceraldehyde 3-phosphate. This is Tryptophan synthase alpha chain from Cronobacter sakazakii (strain ATCC BAA-894) (Enterobacter sakazakii).